We begin with the raw amino-acid sequence, 458 residues long: ATP synthase subunit beta (458 aa).

An ATP-binding site is contributed by 148-155 (GGAGVGKT).

The protein belongs to the ATPase alpha/beta chains family. F-type ATPases have 2 components, CF(1) - the catalytic core - and CF(0) - the membrane proton channel. CF(1) has five subunits: alpha(3), beta(3), gamma(1), delta(1), epsilon(1). CF(0) has three main subunits: a(1), b(2) and c(9-12). The alpha and beta chains form an alternating ring which encloses part of the gamma chain. CF(1) is attached to CF(0) by a central stalk formed by the gamma and epsilon chains, while a peripheral stalk is formed by the delta and b chains.

Its subcellular location is the cell inner membrane. It catalyses the reaction ATP + H2O + 4 H(+)(in) = ADP + phosphate + 5 H(+)(out). Produces ATP from ADP in the presence of a proton gradient across the membrane. The catalytic sites are hosted primarily by the beta subunits. The polypeptide is ATP synthase subunit beta (Pseudomonas putida (strain W619)).